A 406-amino-acid chain; its full sequence is N-acetylmuramoyl-L-alanine amidase CwlM (406 aa).

Peptidoglycan-binding domain stretches follow at residues 18-83 (SAAV…YRAL) and 105-160 (GDDV…LRSL). Residues 193–370 (IIIDPGRGGV…IAEGILAAVK (178 aa)) enclose the MurNAc-LAA domain.

Belongs to the N-acetylmuramoyl-L-alanine amidase 3 family.

The protein resides in the periplasm. It catalyses the reaction Hydrolyzes the link between N-acetylmuramoyl residues and L-amino acid residues in certain cell-wall glycopeptides.. Its pathway is cell wall degradation; peptidoglycan degradation. Cell-wall hydrolase that hydrolyzes the amide bond between N-acetylmuramic acid and L-alanine in cell-wall glycopeptides. Is able to lyse whole mycobacteria, release peptidoglycan from the cell wall of M.luteus and M.smegmatis, and cleave N-acetylmuramoyl-L-alanyl-D-isoglutamine, releasing free N-acetylmuramic acid and dipeptide. In Mycobacterium tuberculosis (strain ATCC 25618 / H37Rv), this protein is N-acetylmuramoyl-L-alanine amidase CwlM.